The chain runs to 146 residues: Large ribosomal subunit protein uL15 (146 aa).

A disordered region spans residues 1 to 55 (MGLRLNELSPGVGAKKTAQRRGRGIGSGLGKTGGRGVKGQKSRSGSSIRSGFEGG). Residues 24 to 37 (GIGSGLGKTGGRGV) are compositionally biased toward gly residues.

Belongs to the universal ribosomal protein uL15 family. In terms of assembly, part of the 50S ribosomal subunit.

In terms of biological role, binds to the 23S rRNA. The polypeptide is Large ribosomal subunit protein uL15 (Psychrobacter cryohalolentis (strain ATCC BAA-1226 / DSM 17306 / VKM B-2378 / K5)).